Reading from the N-terminus, the 241-residue chain is Neuroendocrine secretory protein 55 (241 aa).

A signal peptide spans 1-46 (MDRRSRPQLGRRARHNYNDLCPPIGRRAATALLWLSCSIALLRALA). Residues 71 to 241 (AAQVFPEPPE…KRGAIPIRRH (171 aa)) are disordered. Positions 97 to 125 (EYQEEEFDYESETESESEIESETEFETES) are enriched in acidic residues. Over residues 167-177 (PDASPSRAPPS) the composition is skewed to low complexity. Positions 182–198 (ESPRQGEEPEDKDPRDP) are enriched in basic and acidic residues. Over residues 212-221 (QHRCKPKKPT) the composition is skewed to basic residues.

Belongs to the NESP55 family. Post-translationally, binds keratan sulfate chains. May be proteolytically processed to give rise to a number of active peptides. Highly expressed in adrenal medulla and anterior and posterior pituitary. In the brain, detected in hypothalamus, hippocampus, caudate nucleus, thalamus and, in significantly lower amounts, in the cerebellum.

It is found in the cytoplasmic vesicle. The protein localises to the secretory vesicle. The protein resides in the secreted. The polypeptide is Neuroendocrine secretory protein 55 (Bos taurus (Bovine)).